The primary structure comprises 398 residues: Large ribosomal subunit protein uL3 (398 aa).

Residues 1–10 (MSHRKFEAPR) are compositionally biased toward basic and acidic residues. A disordered region spans residues 1–34 (MSHRKFEAPRHGNLGFRPRKRAARHQGKVKSFPK). The segment covering 17 to 28 (RPRKRAARHQGK) has biased composition (basic residues).

It belongs to the universal ribosomal protein uL3 family.

It localises to the cytoplasm. The L3 protein is a component of the large subunit of cytoplasmic ribosomes. This is Large ribosomal subunit protein uL3 (rpl3) from Dictyostelium discoideum (Social amoeba).